The following is a 533-amino-acid chain: Protein mono-ADP-ribosyltransferase PARP3 (533 aa).

A disordered region spans residues 1–30; the sequence is MAPKPKPWVQTEGPEKKKGRQAGREEDPFR. Lysine 6 carries the post-translational modification N6-(ADP-ribosyl)lysine. ADP-ribosyl glutamic acid occurs at positions 12, 15, 26, and 34. Positions 14 to 20 match the Nuclear localization signal motif; that stretch reads PEKKKGR. Position 37 is an N6-(ADP-ribosyl)lysine (lysine 37). The WGR domain maps to 59-150; the sequence is GTQVYEDYNC…DHFVSHPGKY (92 aa). At aspartate 141 the chain carries ADP-ribosyl aspartic acid. ADP-ribosyl glutamic acid is present on glutamate 163. The PARP alpha-helical domain maps to 182-300; the sequence is PCSLDPATQK…DIELAQALQA (119 aa). Position 210 is an ADP-ribosyl aspartic acid (aspartate 210). ADP-ribosyl glutamic acid is present on residues glutamate 231, glutamate 309, glutamate 310, glutamate 344, and glutamate 449. Residues 313 to 533 enclose the PARP catalytic domain; that stretch reads HPLDRDYQLL…RLRYLLEVHL (221 aa). The tract at residues 454–482 is disordered; sequence TDNPSLKSPPPGFDSVIARGHTEPDPTQD.

Belongs to the ARTD/PARP family. In terms of assembly, interacts with PARP1; leading to activate PARP1 in absence of DNA. Interacts with PRKDC. Interacts with XRCC5/Ku80; the interaction is dependent on nucleic acids. Interacts with XRCC6/Ku70; the interaction is dependent on nucleic acids. Interacts with EZH2, HDAC1, HDAC2, SUZ12, YY1, LRIG3 and LIG4. Post-translationally, auto-mono-ADP-ribosylated. As to expression, widely expressed; the highest levels are in the kidney, skeletal muscle, liver, heart and spleen; also detected in pancreas, lung, placenta, brain, leukocytes, colon, small intestine, ovary, testis, prostate and thymus.

It localises to the nucleus. The protein localises to the chromosome. It is found in the cytoplasm. The protein resides in the cytoskeleton. Its subcellular location is the microtubule organizing center. It localises to the centrosome. The protein localises to the centriole. It catalyses the reaction L-aspartyl-[protein] + NAD(+) = 4-O-(ADP-D-ribosyl)-L-aspartyl-[protein] + nicotinamide. It carries out the reaction L-glutamyl-[protein] + NAD(+) = 5-O-(ADP-D-ribosyl)-L-glutamyl-[protein] + nicotinamide. The catalysed reaction is L-lysyl-[protein] + NAD(+) = N(6)-(ADP-D-ribosyl)-L-lysyl-[protein] + nicotinamide + H(+). Its activity is regulated as follows. Mono-ADP-ribosyltransferase activity of PARP3 is selectively inhibited by ME0328 compound; ME0328 does not inhibit other ARTD/PARP enzymes, such as PARP1. Mono-ADP-ribosyltransferase is strongly inhibited by KU0058948 compound. In terms of biological role, mono-ADP-ribosyltransferase that mediates mono-ADP-ribosylation of target proteins and plays a key role in the response to DNA damage. Mediates mono-ADP-ribosylation of glutamate, aspartate or lysine residues on target proteins. In contrast to PARP1 and PARP2, it is not able to mediate poly-ADP-ribosylation. Involved in DNA repair by mediating mono-ADP-ribosylation of a limited number of acceptor proteins involved in chromatin architecture and in DNA metabolism, such as histone H2B, XRCC5 and XRCC6. ADP-ribosylation follows DNA damage and appears as an obligatory step in a detection/signaling pathway leading to the reparation of DNA strand breaks. Involved in single-strand break repair by catalyzing mono-ADP-ribosylation of histone H2B on 'Glu-2' (H2BE2ADPr) of nucleosomes containing nicked DNA. Cooperates with the XRCC5-XRCC6 (Ku80-Ku70) heterodimer to limit end-resection thereby promoting accurate NHEJ. Suppresses G-quadruplex (G4) structures in response to DNA damage. Associates with a number of DNA repair factors and is involved in the response to exogenous and endogenous DNA strand breaks. Together with APLF, promotes the retention of the LIG4-XRCC4 complex on chromatin and accelerate DNA ligation during non-homologous end-joining (NHEJ). May link the DNA damage surveillance network to the mitotic fidelity checkpoint. Acts as a negative regulator of immunoglobulin class switch recombination, probably by controlling the level of AICDA /AID on the chromatin. In addition to proteins, also able to ADP-ribosylate DNA: mediates DNA mono-ADP-ribosylation of DNA strand break termini via covalent addition of a single ADP-ribose moiety to a 5'- or 3'-terminal phosphate residues in DNA containing multiple strand breaks. In Homo sapiens (Human), this protein is Protein mono-ADP-ribosyltransferase PARP3.